The primary structure comprises 663 residues: DNA topoisomerase 4 subunit B (663 aa).

ATP-binding positions include tyrosine 7, asparagine 47, aspartate 74, 114–120 (GLHGVGA), and lysine 341. The disordered stretch occupies residues 386–416 (REAARKAREDARSGKKNKRKDTLLSGKLTPA). Positions 387–398 (EAARKAREDARS) are enriched in basic and acidic residues. Positions 424–538 (NELYLVEGDS…AGRVFIALPP (115 aa)) constitute a Toprim domain. Residues glutamate 430, aspartate 503, and aspartate 505 each coordinate Mg(2+).

Belongs to the type II topoisomerase family. ParE type 2 subfamily. As to quaternary structure, heterotetramer composed of ParC and ParE. It depends on Mg(2+) as a cofactor. The cofactor is Mn(2+). Ca(2+) serves as cofactor.

It carries out the reaction ATP-dependent breakage, passage and rejoining of double-stranded DNA.. Functionally, topoisomerase IV is essential for chromosome segregation. It relaxes supercoiled DNA. Performs the decatenation events required during the replication of a circular DNA molecule. The protein is DNA topoisomerase 4 subunit B of Staphylococcus aureus (strain NCTC 8325 / PS 47).